Consider the following 474-residue polypeptide: Cytochrome c biogenesis protein CcsB (474 aa).

3 helical membrane-spanning segments follow: residues 36–56 (LKLA…GTVI), 96–116 (SWWF…CTFR), and 182–202 (VGPI…MIGA).

Belongs to the Ccs1/CcsB family. As to quaternary structure, may interact with CcsA.

It localises to the cell inner membrane. Its function is as follows. Required during biogenesis of c-type cytochromes (cytochrome c6 and cytochrome f) at the step of heme attachment. In Gloeobacter violaceus (strain ATCC 29082 / PCC 7421), this protein is Cytochrome c biogenesis protein CcsB.